Consider the following 158-residue polypeptide: Endoribonuclease YbeY (158 aa).

Zn(2+)-binding residues include H119, H123, and H129.

The protein belongs to the endoribonuclease YbeY family. The cofactor is Zn(2+).

It is found in the cytoplasm. Functionally, single strand-specific metallo-endoribonuclease involved in late-stage 70S ribosome quality control and in maturation of the 3' terminus of the 16S rRNA. The chain is Endoribonuclease YbeY from Shewanella sediminis (strain HAW-EB3).